The primary structure comprises 87 residues: U14-lycotoxin-Ls1c (87 aa).

The first 20 residues, 1–20 (MNSKVFAVLLLLALLTCILS), serve as a signal peptide directing secretion. The 46-residue stretch at 21 to 66 (EKYCPTPRNTSCKKMNIKNNCCRDSDCTSNAFCCAEPCGNFCHKAS) folds into the WAP domain. Cystine bridges form between Cys24–Cys54, Cys32–Cys58, Cys41–Cys53, Cys42–Cys80, and Cys47–Cys62.

It belongs to the venom protein 11 family. 01 (wap-1) subfamily. Contains 5 disulfide bonds. As to expression, expressed by the venom gland.

It is found in the secreted. Has antibacterial activity. The chain is U14-lycotoxin-Ls1c from Lycosa singoriensis (Wolf spider).